We begin with the raw amino-acid sequence, 33 residues long: Unknown 31.6 kDa protein from 2D-PAGE (33 aa).

This chain is Unknown 31.6 kDa protein from 2D-PAGE, found in Onion yellows phytoplasma.